A 194-amino-acid polypeptide reads, in one-letter code: Peptidyl-tRNA hydrolase (194 aa).

Tyrosine 16 contributes to the tRNA binding site. Residue histidine 21 is the Proton acceptor of the active site. The tRNA site is built by phenylalanine 67, asparagine 69, and asparagine 115.

Belongs to the PTH family. As to quaternary structure, monomer.

It is found in the cytoplasm. It carries out the reaction an N-acyl-L-alpha-aminoacyl-tRNA + H2O = an N-acyl-L-amino acid + a tRNA + H(+). Its function is as follows. Hydrolyzes ribosome-free peptidyl-tRNAs (with 1 or more amino acids incorporated), which drop off the ribosome during protein synthesis, or as a result of ribosome stalling. Functionally, catalyzes the release of premature peptidyl moieties from peptidyl-tRNA molecules trapped in stalled 50S ribosomal subunits, and thus maintains levels of free tRNAs and 50S ribosomes. In Salmonella paratyphi B (strain ATCC BAA-1250 / SPB7), this protein is Peptidyl-tRNA hydrolase.